A 449-amino-acid chain; its full sequence is Naphthalene 1,2-dioxygenase system, large oxygenase component (449 aa).

The Rieske domain occupies 39–137 (WLFLTHDSLI…LNKKCLGLKE (99 aa)). The [2Fe-2S] cluster site is built by Cys81, His83, Cys101, and His104. His208, His213, and Asp362 together coordinate Fe cation.

The protein belongs to the bacterial ring-hydroxylating dioxygenase alpha subunit family. In terms of assembly, the naphthalene dioxygenase (NDO) multicomponent enzyme system is composed of an electron transfer component and a dioxygenase component (iron sulfur protein (ISP)). The electron transfer component is composed of a ferredoxin reductase (NdoR) and a ferredoxin (NdoA), and the dioxygenase component is formed of a heterohexamer (trimer of heterodimers) of three large alpha subunits (NdoB) and three small beta subunits (NdoC). [2Fe-2S] cluster is required as a cofactor. It depends on Fe(2+) as a cofactor.

The enzyme catalyses naphthalene + NADH + O2 + H(+) = (1R,2S)-1,2-dihydronaphthalene-1,2-diol + NAD(+). It functions in the pathway aromatic compound metabolism; naphthalene degradation. Functionally, component of the naphthalene dioxygenase (NDO) multicomponent enzyme system which catalyzes the incorporation of both atoms of molecular oxygen into naphthalene to form cis-(1R,2S)-dihydroxy-1,2-dihydronaphthalene. The alpha subunit has a catalytic role in the holoenzyme. The chain is Naphthalene 1,2-dioxygenase system, large oxygenase component from Pseudomonas fluorescens.